Consider the following 345-residue polypeptide: N-acetyl-gamma-glutamyl-phosphate reductase (345 aa).

Residue cysteine 149 is part of the active site.

It belongs to the NAGSA dehydrogenase family. Type 1 subfamily.

The protein resides in the cytoplasm. It catalyses the reaction N-acetyl-L-glutamate 5-semialdehyde + phosphate + NADP(+) = N-acetyl-L-glutamyl 5-phosphate + NADPH + H(+). It functions in the pathway amino-acid biosynthesis; L-arginine biosynthesis; N(2)-acetyl-L-ornithine from L-glutamate: step 3/4. Its function is as follows. Catalyzes the NADPH-dependent reduction of N-acetyl-5-glutamyl phosphate to yield N-acetyl-L-glutamate 5-semialdehyde. The polypeptide is N-acetyl-gamma-glutamyl-phosphate reductase (Bacillus subtilis (strain 168)).